A 468-amino-acid polypeptide reads, in one-letter code: N-acyl-phosphatidylethanolamine-hydrolyzing phospholipase D, mitochondrial (468 aa).

Residues 1–39 constitute a mitochondrion transit peptide; the sequence is MNFVTCHVQMRLLLQRRLVRLRESELFRPQTSLSTFKRH. A helical transmembrane segment spans residues 54–76; it reads YARILLLSVLVPYTGYAFYVSLA. Zn(2+)-binding residues include histidine 265, histidine 267, aspartate 269, histidine 270, histidine 332, and histidine 425.

This sequence belongs to the NAPE-PLD family. Zn(2+) is required as a cofactor.

Its subcellular location is the mitochondrion membrane. The catalysed reaction is an N-acyl-1,2-diacyl-sn-glycero-3-phosphoethanolamine + H2O = an N-acylethanolamine + a 1,2-diacyl-sn-glycero-3-phosphate + H(+). In terms of biological role, hydrolyzes N-acyl-phosphatidylethanolamines (NAPEs) to produce N-acylethanolamines (NAEs). This chain is N-acyl-phosphatidylethanolamine-hydrolyzing phospholipase D, mitochondrial (FMP30), found in Saccharomyces cerevisiae (strain ATCC 204508 / S288c) (Baker's yeast).